The chain runs to 271 residues: Small ribosomal subunit protein uS2 (271 aa).

The protein belongs to the universal ribosomal protein uS2 family.

The chain is Small ribosomal subunit protein uS2 from Wolbachia pipientis subsp. Culex pipiens (strain wPip).